The sequence spans 312 residues: Homoserine O-acetyltransferase (312 aa).

The active-site Acyl-thioester intermediate is the cysteine 142. Substrate contacts are provided by lysine 163 and serine 192. Histidine 235 functions as the Proton acceptor in the catalytic mechanism. Glutamate 237 is a catalytic residue. Substrate is bound at residue arginine 249.

The protein belongs to the MetA family.

The protein resides in the cytoplasm. The catalysed reaction is L-homoserine + acetyl-CoA = O-acetyl-L-homoserine + CoA. It participates in amino-acid biosynthesis; L-methionine biosynthesis via de novo pathway; O-acetyl-L-homoserine from L-homoserine: step 1/1. Transfers an acetyl group from acetyl-CoA to L-homoserine, forming acetyl-L-homoserine. This Ruegeria pomeroyi (strain ATCC 700808 / DSM 15171 / DSS-3) (Silicibacter pomeroyi) protein is Homoserine O-acetyltransferase.